The sequence spans 166 residues: Phosphopantetheine adenylyltransferase (166 aa).

S10 serves as a coordination point for substrate. ATP-binding positions include 10-11 (SF) and H18. Positions 42, 79, and 93 each coordinate substrate. Residues 94-96 (GLR), E104, and 129-135 (VRPITAT) each bind ATP.

Belongs to the bacterial CoaD family. In terms of assembly, homohexamer. Mg(2+) is required as a cofactor.

The protein localises to the cytoplasm. The enzyme catalyses (R)-4'-phosphopantetheine + ATP + H(+) = 3'-dephospho-CoA + diphosphate. It functions in the pathway cofactor biosynthesis; coenzyme A biosynthesis; CoA from (R)-pantothenate: step 4/5. Its function is as follows. Reversibly transfers an adenylyl group from ATP to 4'-phosphopantetheine, yielding dephospho-CoA (dPCoA) and pyrophosphate. In Methylobacterium nodulans (strain LMG 21967 / CNCM I-2342 / ORS 2060), this protein is Phosphopantetheine adenylyltransferase.